A 346-amino-acid polypeptide reads, in one-letter code: MSKEFFWGDSLTGTKKEVKWNPSLDDEDDFDNLDSDGIQHFLFLKQAVLGANAKEGERNVVEIETENFDGDNVKQPLFSLKLGLNESSPLDIGIQPPVTFILTAGSGPVFLSGQHMIEISADDEEELEEDDEEEEEEDEVEVNASPDLPVAKSKKRPLSTSDGTAKKTKMAKLDKDADKKEDDDEEEDDEEEDEVMAMMDDDEDDEDDEDFEGGEDDEEEDEEESDEDEDDEDDNEEEEEEDEDEESPEKPLKTTAKGKKGQMNGTTTAKGDNKPKAKAKTDTKLVKGKAKKKVLALDEIKGKLQESSNVPKKEEKFKNYVRSAFHISEAKKLQDLWGWFRASLQK.

S2 carries the post-translational modification N-acetylserine. N85 carries N-linked (GlcNAc...) asparagine glycosylation. Acidic residues predominate over residues 123 to 141 (DEEELEEDDEEEEEEDEVE). The disordered stretch occupies residues 123-285 (DEEELEEDDE…KAKAKTDTKL (163 aa)). A Phosphoserine; by CDC2 modification is found at S145. Over residues 171–180 (AKLDKDADKK) the composition is skewed to basic and acidic residues. The span at 181-247 (EDDDEEEDDE…EEEEDEDEES (67 aa)) shows a compositional bias: acidic residues. A glycan (N-linked (GlcNAc...) asparagine) is linked at N264. A compositionally biased stretch (basic and acidic residues) spans 271 to 285 (GDNKPKAKAKTDTKL).

Belongs to the nucleoplasmin family. Post-translationally, phosphorylation occurs in oocytes during the progression of the first meiotic M phase. No phosphorylation is observed in immature oocytes. In terms of tissue distribution, expressed specifically in the oocytes of the ovaries.

It is found in the nucleus. The protein resides in the nucleolus. Its subcellular location is the cytoplasm. Its function is as follows. Binds double-stranded RNA and both single-stranded and double-stranded DNA. In Patiria pectinifera (Starfish), this protein is Nucleoplasmin-like protein ANO39.